Reading from the N-terminus, the 298-residue chain is MRDRTHELRQGDNISDDEDEVRVALVVHSGAARLSSPDDEFFQKVQTIRQTMAKLESKVRELEKQQVTILATPLPEESMKQGLQNLREEIKQLGREVRAQLKAIEPQKEEADENYNSVNTRMKKTQHGVLSQQFVELINKCNSMQSEYREKNVERIRRQLKITNAGMVSDEELEQMLDSGQSEVFVSNILKDTQVTRQALNEISARHSEIQQLERSIRELHEIFTFLATEVEMQGEMINRIEKNILSSADYVERGQEHVKIALENQKKARKKKVMIAICVSVTVLILAVIIGITITVG.

Topologically, residues 1-274 (MRDRTHELRQ…NQKKARKKKV (274 aa)) are cytoplasmic. 7 positions are modified to phosphoserine: Ser-15, Ser-29, Ser-35, Ser-36, Ser-117, Ser-208, and Ser-248. Residues 38-163 (DDEFFQKVQT…ERIRRQLKIT (126 aa)) adopt a coiled-coil conformation. Residues 154 to 298 (ERIRRQLKIT…VIIGITITVG (145 aa)) form an interaction with CENPF region. The 63-residue stretch at 200–262 (LNEISARHSE…ERGQEHVKIA (63 aa)) folds into the t-SNARE coiled-coil homology domain. A helical; Anchor for type IV membrane protein membrane pass occupies residues 275-295 (MIAICVSVTVLILAVIIGITI). The Extracellular portion of the chain corresponds to 296–298 (TVG).

The protein belongs to the syntaxin family. As to quaternary structure, found in a complex with VAMP8 and SNAP23. Detected in a complex with SNAP23 and STXBP4. Interacts with SNAP23 and SNAPIN. Interacts with VAMP2. Interacts with LLGL1. Interacts (via C-terminus) with CENPF. Interacts with DOC2B. Interacts with STXBP3; excludes interaction with DOC2B and SNAP25. Interacts with STXBP4; excludes interaction with VAMP2. Component of the SNARE complex composed of STX4, SNAP23 and VAMP7 that interacts with SYT7 during lysosomal exocytosis. Interacts with STXBP6. Interacts with STXBP5L. Expressed in all tissues tested including adipose, brain, testis, intestine, liver, heart, spleen, skeletal muscle and kidney.

The protein localises to the cell membrane. Its subcellular location is the cell projection. The protein resides in the neuron projection. It is found in the stereocilium. In terms of biological role, plasma membrane t-SNARE that mediates docking of transport vesicles. Necessary for the translocation of SLC2A4 from intracellular vesicles to the plasma membrane. In neurons, recruited at neurite tips to membrane domains rich in the phospholipid 1-oleoyl-2-palmitoyl-PC (OPPC) which promotes neurite tip surface expression of the dopamine transporter SLC6A3/DAT by facilitating fusion of SLC6A3-containing transport vesicles with the plasma membrane. Together with STXB3 and VAMP2, may also play a role in docking/fusion of intracellular GLUT4-containing vesicles with the cell surface in adipocytes and in docking of synaptic vesicles at presynaptic active zones. Required for normal hearing. This is Syntaxin-4 (Stx4) from Rattus norvegicus (Rat).